Consider the following 343-residue polypeptide: Dihydroorotate dehydrogenase (quinone) (343 aa).

FMN contacts are provided by residues 61–65 (AGLDK) and Thr-85. Position 65 (Lys-65) interacts with substrate. Residue 110–114 (NRMGF) coordinates substrate. FMN is bound by residues Asn-138 and Asn-171. Position 171 (Asn-171) interacts with substrate. Ser-174 serves as the catalytic Nucleophile. A substrate-binding site is contributed by Asn-176. FMN contacts are provided by Lys-216 and Thr-244. 245 to 246 (NT) serves as a coordination point for substrate. FMN contacts are provided by residues Gly-267, Gly-296, and 317–318 (YS).

It belongs to the dihydroorotate dehydrogenase family. Type 2 subfamily. Monomer. It depends on FMN as a cofactor.

The protein resides in the cell membrane. The enzyme catalyses (S)-dihydroorotate + a quinone = orotate + a quinol. It participates in pyrimidine metabolism; UMP biosynthesis via de novo pathway; orotate from (S)-dihydroorotate (quinone route): step 1/1. Catalyzes the conversion of dihydroorotate to orotate with quinone as electron acceptor. This is Dihydroorotate dehydrogenase (quinone) from Stutzerimonas stutzeri (strain A1501) (Pseudomonas stutzeri).